Here is a 1378-residue protein sequence, read N- to C-terminus: DNA-directed RNA polymerase subunit beta (1378 aa).

The protein belongs to the RNA polymerase beta chain family. The RNAP catalytic core consists of 2 alpha, 1 beta, 1 beta' and 1 omega subunit. When a sigma factor is associated with the core the holoenzyme is formed, which can initiate transcription.

The catalysed reaction is RNA(n) + a ribonucleoside 5'-triphosphate = RNA(n+1) + diphosphate. Functionally, DNA-dependent RNA polymerase catalyzes the transcription of DNA into RNA using the four ribonucleoside triphosphates as substrates. In Ruegeria pomeroyi (strain ATCC 700808 / DSM 15171 / DSS-3) (Silicibacter pomeroyi), this protein is DNA-directed RNA polymerase subunit beta.